A 296-amino-acid polypeptide reads, in one-letter code: Probable endonuclease 4 (296 aa).

H68, H109, E144, D178, H181, H213, D226, H228, and E258 together coordinate Zn(2+).

This sequence belongs to the AP endonuclease 2 family. Zn(2+) serves as cofactor.

The enzyme catalyses Endonucleolytic cleavage to 5'-phosphooligonucleotide end-products.. Its function is as follows. Endonuclease IV plays a role in DNA repair. It cleaves phosphodiester bonds at apurinic or apyrimidinic (AP) sites, generating a 3'-hydroxyl group and a 5'-terminal sugar phosphate. This Staphylococcus aureus (strain NCTC 8325 / PS 47) protein is Probable endonuclease 4.